Reading from the N-terminus, the 287-residue chain is AA14 family lytic polysaccharide monooxygenase A (287 aa).

A signal peptide spans 1 to 18 (MLRILTLSILATSKLASA). 3 N-linked (GlcNAc...) asparagine glycosylation sites follow: Asn-33, Asn-83, and Asn-137. Disulfide bonds link Cys-188–Cys-193, Cys-195–Cys-216, and Cys-236–Cys-243. An N-linked (GlcNAc...) asparagine glycan is attached at Asn-238.

The protein belongs to the polysaccharide monooxygenase AA14 family. Requires Cu(2+) as cofactor.

The protein resides in the secreted. Lytic polysaccharide monooxygenase (LPMO) that has a broad substrate specificity with strong oxidative activity on pure amorphous cellulose and xyloglucan and plays as a bifunctional enzyme to decompose some specific network structures formed between cellulose and hemicellulose in the plant cell walls. Catalysis by LPMOs requires the reduction of the active-site copper from Cu(II) to Cu(I) by a reducing agent and H(2)O(2) or O(2) as a cosubstrate. Simultaneously oxidizes cellulose, xylan and xyloglucan in natural hemi/cellulosic substrate such as fibrillated eucalyptus pulp, and releases native and oxidized cello-oligosaccharides, xylo-oligosaccharides and xyloglucan oligosaccharides from this substrate. The cellulolytic/hemicellulolytic activity becomes weaker as the contents of xylan increase in the alkaline-extracted hemi/cellulosic substrates. This is AA14 family lytic polysaccharide monooxygenase A from Talaromyces rugulosus (Penicillium rugulosum).